The sequence spans 358 residues: Alanine racemase (358 aa).

The Proton acceptor; specific for D-alanine role is filled by K34. K34 carries the N6-(pyridoxal phosphate)lysine modification. R129 is a substrate binding site. Residue Y254 is the Proton acceptor; specific for L-alanine of the active site. M302 contributes to the substrate binding site.

The protein belongs to the alanine racemase family. Pyridoxal 5'-phosphate serves as cofactor.

The catalysed reaction is L-alanine = D-alanine. The protein operates within amino-acid biosynthesis; D-alanine biosynthesis; D-alanine from L-alanine: step 1/1. Functionally, catalyzes the interconversion of L-alanine and D-alanine. May also act on other amino acids. The polypeptide is Alanine racemase (alr) (Vibrio vulnificus (strain CMCP6)).